A 376-amino-acid chain; its full sequence is uncharacterized protein (376 aa).

Residues 1–31 form the signal peptide; sequence MSRHKVYKAISSYVIIAIIIIAIVAVVGVLL. The disordered stretch occupies residues 37 to 57; the sequence is SSSSVTSTTTPTTSSSVSPSS.

Belongs to the bacterial solute-binding protein 1 family. WtpA subfamily.

This is an uncharacterized protein from Sulfurisphaera tokodaii (strain DSM 16993 / JCM 10545 / NBRC 100140 / 7) (Sulfolobus tokodaii).